We begin with the raw amino-acid sequence, 202 residues long: Holliday junction branch migration complex subunit RuvA (202 aa).

The domain I stretch occupies residues 1 to 63; it reads MIEYLKGAIV…EDAHLLYGFS (63 aa). The domain II stretch occupies residues 64-142; the sequence is TKEERTLFGQ…LETSSDEILS (79 aa). Residues 143-153 are flexible linker; it reads ARTAVGDAALN. A domain III region spans residues 153-202; it reads NTIASGEEAISALKMLGFADPAIRKAVKSILSEDSSLAVEDIIKRALRML.

The protein belongs to the RuvA family. As to quaternary structure, homotetramer. Forms an RuvA(8)-RuvB(12)-Holliday junction (HJ) complex. HJ DNA is sandwiched between 2 RuvA tetramers; dsDNA enters through RuvA and exits via RuvB. An RuvB hexamer assembles on each DNA strand where it exits the tetramer. Each RuvB hexamer is contacted by two RuvA subunits (via domain III) on 2 adjacent RuvB subunits; this complex drives branch migration. In the full resolvosome a probable DNA-RuvA(4)-RuvB(12)-RuvC(2) complex forms which resolves the HJ.

It localises to the cytoplasm. In terms of biological role, the RuvA-RuvB-RuvC complex processes Holliday junction (HJ) DNA during genetic recombination and DNA repair, while the RuvA-RuvB complex plays an important role in the rescue of blocked DNA replication forks via replication fork reversal (RFR). RuvA specifically binds to HJ cruciform DNA, conferring on it an open structure. The RuvB hexamer acts as an ATP-dependent pump, pulling dsDNA into and through the RuvAB complex. HJ branch migration allows RuvC to scan DNA until it finds its consensus sequence, where it cleaves and resolves the cruciform DNA. The protein is Holliday junction branch migration complex subunit RuvA of Porphyromonas gingivalis (strain ATCC BAA-308 / W83).